The following is a 606-amino-acid chain: Elongation factor 4 (606 aa).

The 183-residue stretch at 7 to 189 folds into the tr-type G domain; it reads SRIRNFCIIA…AVVDRVPPPK (183 aa). GTP is bound by residues 19–24 and 136–139; these read DHGKST and NKID.

Belongs to the TRAFAC class translation factor GTPase superfamily. Classic translation factor GTPase family. LepA subfamily.

The protein resides in the cell inner membrane. The enzyme catalyses GTP + H2O = GDP + phosphate + H(+). In terms of biological role, required for accurate and efficient protein synthesis under certain stress conditions. May act as a fidelity factor of the translation reaction, by catalyzing a one-codon backward translocation of tRNAs on improperly translocated ribosomes. Back-translocation proceeds from a post-translocation (POST) complex to a pre-translocation (PRE) complex, thus giving elongation factor G a second chance to translocate the tRNAs correctly. Binds to ribosomes in a GTP-dependent manner. This chain is Elongation factor 4, found in Parasynechococcus marenigrum (strain WH8102).